Reading from the N-terminus, the 93-residue chain is Bombyxin-related peptide B (93 aa).

An N-terminal signal peptide occupies residues 1–21 (MKFVLVLVSLALLVSLASVQG). 3 disulfide bridges follow: C25–C80, C37–C93, and C79–C84. The propeptide at 47 to 71 (SGAMGAAAMYGTRGWRWAAMGGNRG) is c peptide like.

This sequence belongs to the insulin family. As to quaternary structure, heterodimer of a B chain and an A chain linked by two disulfide bonds. As to expression, located in 4 pairs of medial neurosecretory cells in the brain.

It localises to the secreted. The chain is Bombyxin-related peptide B from Agrius convolvuli (Convolvulus hawk-moth).